Here is a 378-residue protein sequence, read N- to C-terminus: Mannitol-1-phosphate 5-dehydrogenase (378 aa).

4-15 is an NAD(+) binding site; sequence SVHFGAGNIGRG.

This sequence belongs to the mannitol dehydrogenase family.

It carries out the reaction D-mannitol 1-phosphate + NAD(+) = beta-D-fructose 6-phosphate + NADH + H(+). The chain is Mannitol-1-phosphate 5-dehydrogenase from Streptococcus pneumoniae (strain ATCC BAA-255 / R6).